A 307-amino-acid polypeptide reads, in one-letter code: Porphobilinogen deaminase (307 aa).

At cysteine 239 the chain carries S-(dipyrrolylmethanemethyl)cysteine.

It belongs to the HMBS family. As to quaternary structure, monomer. Dipyrromethane is required as a cofactor.

The enzyme catalyses 4 porphobilinogen + H2O = hydroxymethylbilane + 4 NH4(+). Its pathway is porphyrin-containing compound metabolism; protoporphyrin-IX biosynthesis; coproporphyrinogen-III from 5-aminolevulinate: step 2/4. Functionally, tetrapolymerization of the monopyrrole PBG into the hydroxymethylbilane pre-uroporphyrinogen in several discrete steps. The chain is Porphobilinogen deaminase from Campylobacter jejuni subsp. jejuni serotype O:23/36 (strain 81-176).